The chain runs to 339 residues: uncharacterized protein (339 aa).

Residues 1–12 (MDIDLNNQTDNN) show a composition bias toward polar residues. Residues 1–30 (MDIDLNNQTDNNELIVEDTENPKNPNSTNI) form a disordered region.

This is an uncharacterized protein from Acanthamoeba polyphaga (Amoeba).